We begin with the raw amino-acid sequence, 486 residues long: Ribosomal RNA small subunit methyltransferase F (486 aa).

Residues 124 to 130 (ASAPGSK), Glu-148, Asp-175, and Asp-193 each bind S-adenosyl-L-methionine. Catalysis depends on Cys-246, which acts as the Nucleophile.

It belongs to the class I-like SAM-binding methyltransferase superfamily. RsmB/NOP family.

The protein resides in the cytoplasm. The catalysed reaction is cytidine(1407) in 16S rRNA + S-adenosyl-L-methionine = 5-methylcytidine(1407) in 16S rRNA + S-adenosyl-L-homocysteine + H(+). Its function is as follows. Specifically methylates the cytosine at position 1407 (m5C1407) of 16S rRNA. The polypeptide is Ribosomal RNA small subunit methyltransferase F (Shewanella baltica (strain OS155 / ATCC BAA-1091)).